The primary structure comprises 732 residues: Polyribonucleotide nucleotidyltransferase (732 aa).

Mg(2+) is bound by residues D503 and D509. Positions 570–629 constitute a KH domain; it reads PRLTAIQVPVESIGLIIGKGGETIRSITEETGAEINIEDDGTVTIACSSNEGTKGAVEII. The S1 motif domain maps to 639–713; it reads GTVYIGKVRD…GKTRFALSIK (75 aa).

It belongs to the polyribonucleotide nucleotidyltransferase family. Requires Mg(2+) as cofactor.

It is found in the cytoplasm. The enzyme catalyses RNA(n+1) + phosphate = RNA(n) + a ribonucleoside 5'-diphosphate. Its function is as follows. Involved in mRNA degradation. Catalyzes the phosphorolysis of single-stranded polyribonucleotides processively in the 3'- to 5'-direction. This is Polyribonucleotide nucleotidyltransferase from Chlorobium phaeovibrioides (strain DSM 265 / 1930) (Prosthecochloris vibrioformis (strain DSM 265)).